The chain runs to 573 residues: LysM domain-containing protein ARB_01155/01156 (573 aa).

A signal peptide spans 1 to 18 (MIPRNLISGLFLLPFVVA). N-linked (GlcNAc...) asparagine glycans are attached at residues N46, N71, and N283. Residues 373-419 (RYYEVVAGDQCNTIALHFGITVDAFLSLNTQIDERCSNLWIAYAYCV) form the LysM domain. The tract at residues 375–405 (YEVVAGDQCNTIALHFGITVDAFLSLNTQID) is lysM domain.

The protein localises to the secreted. Functionally, might have a role in sequestration of chitin oligosaccharides (breakdown products of fungal cell walls that are released during invasion and act as triggers of host immunity) to dampen host defense. The chain is LysM domain-containing protein ARB_01155/01156 from Arthroderma benhamiae (strain ATCC MYA-4681 / CBS 112371) (Trichophyton mentagrophytes).